We begin with the raw amino-acid sequence, 303 residues long: Kynurenine formamidase (303 aa).

Residues 95–99 (HGGYW) carry the HGGXW motif. Residue serine 164 is the Nucleophile of the active site. Catalysis depends on residues aspartate 247 and histidine 279.

This sequence belongs to the kynurenine formamidase family. Homodimer.

The protein resides in the cytoplasm. It localises to the cytosol. Its subcellular location is the nucleus. The enzyme catalyses N-formyl-L-kynurenine + H2O = L-kynurenine + formate + H(+). The protein operates within amino-acid degradation; L-tryptophan degradation via kynurenine pathway; L-kynurenine from L-tryptophan: step 2/2. Catalyzes the hydrolysis of N-formyl-L-kynurenine to L-kynurenine, the second step in the kynurenine pathway of tryptophan degradation. Kynurenine may be further oxidized to nicotinic acid, NAD(H) and NADP(H). Required for elimination of toxic metabolites. The chain is Kynurenine formamidase from Homo sapiens (Human).